The chain runs to 230 residues: Demethylmenaquinone methyltransferase (230 aa).

S-adenosyl-L-methionine is bound by residues threonine 62, aspartate 80, 100–101 (DG), and serine 117.

It belongs to the class I-like SAM-binding methyltransferase superfamily. MenG/UbiE family.

It catalyses the reaction a 2-demethylmenaquinol + S-adenosyl-L-methionine = a menaquinol + S-adenosyl-L-homocysteine + H(+). It functions in the pathway quinol/quinone metabolism; menaquinone biosynthesis; menaquinol from 1,4-dihydroxy-2-naphthoate: step 2/2. Methyltransferase required for the conversion of demethylmenaquinol (DMKH2) to menaquinol (MKH2). This Corynebacterium urealyticum (strain ATCC 43042 / DSM 7109) protein is Demethylmenaquinone methyltransferase.